Here is a 376-residue protein sequence, read N- to C-terminus: Queuine tRNA-ribosyltransferase (376 aa).

Catalysis depends on Asp93, which acts as the Proton acceptor. Substrate is bound by residues 93–97 (DSGGF), Asp147, Gln190, and Gly217. An RNA binding region spans residues 248–254 (GVGTPDD). The active-site Nucleophile is Asp267. The interval 272-276 (TRAGR) is RNA binding; important for wobble base 34 recognition.

Belongs to the queuine tRNA-ribosyltransferase family. In terms of assembly, homodimer. Within each dimer, one monomer is responsible for RNA recognition and catalysis, while the other monomer binds to the replacement base PreQ1.

The enzyme catalyses 7-aminomethyl-7-carbaguanine + guanosine(34) in tRNA = 7-aminomethyl-7-carbaguanosine(34) in tRNA + guanine. The protein operates within tRNA modification; tRNA-queuosine biosynthesis. Catalyzes the base-exchange of a guanine (G) residue with the queuine precursor 7-aminomethyl-7-deazaguanine (PreQ1) at position 34 (anticodon wobble position) in tRNAs with GU(N) anticodons (tRNA-Asp, -Asn, -His and -Tyr). Catalysis occurs through a double-displacement mechanism. The nucleophile active site attacks the C1' of nucleotide 34 to detach the guanine base from the RNA, forming a covalent enzyme-RNA intermediate. The proton acceptor active site deprotonates the incoming PreQ1, allowing a nucleophilic attack on the C1' of the ribose to form the product. After dissociation, two additional enzymatic reactions on the tRNA convert PreQ1 to queuine (Q), resulting in the hypermodified nucleoside queuosine (7-(((4,5-cis-dihydroxy-2-cyclopenten-1-yl)amino)methyl)-7-deazaguanosine). This Mesorhizobium japonicum (strain LMG 29417 / CECT 9101 / MAFF 303099) (Mesorhizobium loti (strain MAFF 303099)) protein is Queuine tRNA-ribosyltransferase.